The following is a 78-amino-acid chain: Small ribosomal subunit protein bS20 (78 aa).

The segment at 55–78 (KSKGLIHKNKASRDKARLASKLAK) is disordered.

It belongs to the bacterial ribosomal protein bS20 family.

Binds directly to 16S ribosomal RNA. This chain is Small ribosomal subunit protein bS20, found in Streptococcus mutans serotype c (strain ATCC 700610 / UA159).